We begin with the raw amino-acid sequence, 118 residues long: Large ribosomal subunit protein bL19 (118 aa).

Belongs to the bacterial ribosomal protein bL19 family.

This protein is located at the 30S-50S ribosomal subunit interface and may play a role in the structure and function of the aminoacyl-tRNA binding site. This is Large ribosomal subunit protein bL19 from Frankia alni (strain DSM 45986 / CECT 9034 / ACN14a).